We begin with the raw amino-acid sequence, 101 residues long: uncharacterized protein (101 aa).

The protein resides in the plastid. It is found in the chloroplast. This is an uncharacterized protein from Chlamydomonas reinhardtii (Chlamydomonas smithii).